The primary structure comprises 278 residues: MSLALNPVAFNLGPFQVKWYGILMATGVLVATLMAINEGKKRHIMPDDFIDFLLWAVPIGFIGARIYYVVFEWGYFSQHPDQIIAIWNGGIAIYGGLIAGLIVLLIFCHQRMLPPFLMLDIIAPGVMAAQVIARWGNFMNQEAHGAKTTLSFLESLHLPHFIIQQMYINGSYYQPTYLYESTLNLIGLILILSLRHRKHLFKRGEIFLSYVIWYSAVRFFVEGMRTDSLYIANTIRVSQALSLILFFGAIILWIYRRKVVKPKWYLAGSGLKYPYNRD.

4 helical membrane passes run 19-39 (WYGILMATGVLVATLMAINEG), 49-69 (FIDFLLWAVPIGFIGARIYYV), 86-106 (IWNGGIAIYGGLIAGLIVLLI), and 112-132 (MLPPFLMLDIIAPGVMAAQVI). Arginine 134 contributes to the a 1,2-diacyl-sn-glycero-3-phospho-(1'-sn-glycerol) binding site. 3 helical membrane passes run 174–194 (QPTYLYESTLNLIGLILILSL), 204–224 (GEIFLSYVIWYSAVRFFVEGM), and 235–255 (IRVSQALSLILFFGAIILWIY).

It belongs to the Lgt family.

Its subcellular location is the cell membrane. The catalysed reaction is L-cysteinyl-[prolipoprotein] + a 1,2-diacyl-sn-glycero-3-phospho-(1'-sn-glycerol) = an S-1,2-diacyl-sn-glyceryl-L-cysteinyl-[prolipoprotein] + sn-glycerol 1-phosphate + H(+). It participates in protein modification; lipoprotein biosynthesis (diacylglyceryl transfer). Functionally, catalyzes the transfer of the diacylglyceryl group from phosphatidylglycerol to the sulfhydryl group of the N-terminal cysteine of a prolipoprotein, the first step in the formation of mature lipoproteins. The polypeptide is Phosphatidylglycerol--prolipoprotein diacylglyceryl transferase (Lactobacillus johnsonii (strain CNCM I-12250 / La1 / NCC 533)).